Consider the following 254-residue polypeptide: MLLVIDVGNTNTVLGVFDGEELVHDWRIRTVIENTVDEYGMLMYNLYKTSKISSKAIQHIIISCVVPPMLNILEPVCEKYFQVKPLIVGPGIKTGMPIFYDNPKEVGADRIVNAVAVFEKYKREAIVVDFGTATTFDYVSPRGEYMGGCIAPGIVISSEALFTRASKLPRVEFSTPKLIIAKDTVSSMQAGIIYGYAGLVDGIVARMKEEIGSNPLVIATGGLAKVVKPETRSIEMIDDMLTLEGLRLIYKRNS.

6–13 (DVGNTNTV) contacts ATP. Residues tyrosine 100 and 107-110 (GADR) each bind substrate. Residue aspartate 109 is the Proton acceptor of the active site. Residue aspartate 129 participates in K(+) binding. ATP is bound at residue threonine 132. Position 184 (threonine 184) interacts with substrate.

This sequence belongs to the type III pantothenate kinase family. Homodimer. Requires NH4(+) as cofactor. K(+) serves as cofactor.

It localises to the cytoplasm. The catalysed reaction is (R)-pantothenate + ATP = (R)-4'-phosphopantothenate + ADP + H(+). The protein operates within cofactor biosynthesis; coenzyme A biosynthesis; CoA from (R)-pantothenate: step 1/5. Catalyzes the phosphorylation of pantothenate (Pan), the first step in CoA biosynthesis. This Syntrophus aciditrophicus (strain SB) protein is Type III pantothenate kinase.